Reading from the N-terminus, the 205-residue chain is MSATPRPHDLVWLNHASALEDIAEPWVAQQWRAALPVVVRRDVDDQARVPVGVRGMKREQRAAGWVQARNIVRSVTPEMLVDREVLLHSPFVSQPPVQGAIALTLHRWPWGWGVTGSTGYALATEIPVLHAASDLDLLIRAPQPLDREALLEWQTRVAQLPCRADTQVETPYGAFALNEWLRDGRALLKTSRGARLTATPWHREE.

Residues Asp-134 and Asp-136 contribute to the active site.

This sequence belongs to the MdcG family.

The enzyme catalyses apo-[malonate decarboxylase ACP] + 2'-(5''-triphospho-alpha-D-ribosyl)-3'-dephospho-CoA = holo-[malonate decarboxylase ACP] + diphosphate. In terms of biological role, transfers 2'-(5-triphosphoribosyl)-3'-dephosphocoenzyme-A to the apo-[acyl-carrier-protein] of the malonate decarboxylase to yield holo-[acyl-carrier-protein]. The protein is Phosphoribosyl-dephospho-CoA transferase (mdcG) of Klebsiella pneumoniae.